The sequence spans 275 residues: 4-diphosphocytidyl-2-C-methyl-D-erythritol kinase (275 aa).

Residue K14 is part of the active site. 98–108 (PMGAGLGGGSS) lines the ATP pocket. Residue D140 is part of the active site.

Belongs to the GHMP kinase family. IspE subfamily.

It catalyses the reaction 4-CDP-2-C-methyl-D-erythritol + ATP = 4-CDP-2-C-methyl-D-erythritol 2-phosphate + ADP + H(+). Its pathway is isoprenoid biosynthesis; isopentenyl diphosphate biosynthesis via DXP pathway; isopentenyl diphosphate from 1-deoxy-D-xylulose 5-phosphate: step 3/6. Catalyzes the phosphorylation of the position 2 hydroxy group of 4-diphosphocytidyl-2C-methyl-D-erythritol. The chain is 4-diphosphocytidyl-2-C-methyl-D-erythritol kinase from Francisella tularensis subsp. novicida (strain U112).